The primary structure comprises 377 residues: Protein-glutamate methylesterase/protein-glutamine glutaminase 1 (377 aa).

One can recognise a Response regulatory domain in the interval Lys-4 to Leu-121. 4-aspartylphosphate is present on Asp-55. Residues Arg-138 to Arg-170 form a disordered region. A compositionally biased stretch (low complexity) spans Pro-146 to Ser-157. In terms of domain architecture, CheB-type methylesterase spans Ser-184–Ala-377. Active-site residues include Ser-196, His-223, and Asp-319.

The protein belongs to the CheB family. Phosphorylated by CheA. Phosphorylation of the N-terminal regulatory domain activates the methylesterase activity.

The protein localises to the cytoplasm. The catalysed reaction is [protein]-L-glutamate 5-O-methyl ester + H2O = L-glutamyl-[protein] + methanol + H(+). It catalyses the reaction L-glutaminyl-[protein] + H2O = L-glutamyl-[protein] + NH4(+). Involved in chemotaxis. Part of a chemotaxis signal transduction system that modulates chemotaxis in response to various stimuli. Catalyzes the demethylation of specific methylglutamate residues introduced into the chemoreceptors (methyl-accepting chemotaxis proteins or MCP) by CheR. Also mediates the irreversible deamidation of specific glutamine residues to glutamic acid. The polypeptide is Protein-glutamate methylesterase/protein-glutamine glutaminase 1 (Vibrio cholerae serotype O1 (strain ATCC 39315 / El Tor Inaba N16961)).